Consider the following 608-residue polypeptide: 1-deoxy-D-xylulose-5-phosphate synthase (608 aa).

Thiamine diphosphate is bound by residues His66 and 107–109; that span reads GHA. Asp138 lines the Mg(2+) pocket. Thiamine diphosphate contacts are provided by residues 139 to 140, Asn167, Phe277, and Glu350; that span reads GA. Mg(2+) is bound at residue Asn167.

This sequence belongs to the transketolase family. DXPS subfamily. In terms of assembly, homodimer. Requires Mg(2+) as cofactor. Thiamine diphosphate is required as a cofactor.

The catalysed reaction is D-glyceraldehyde 3-phosphate + pyruvate + H(+) = 1-deoxy-D-xylulose 5-phosphate + CO2. It functions in the pathway metabolic intermediate biosynthesis; 1-deoxy-D-xylulose 5-phosphate biosynthesis; 1-deoxy-D-xylulose 5-phosphate from D-glyceraldehyde 3-phosphate and pyruvate: step 1/1. Catalyzes the acyloin condensation reaction between C atoms 2 and 3 of pyruvate and glyceraldehyde 3-phosphate to yield 1-deoxy-D-xylulose-5-phosphate (DXP). The sequence is that of 1-deoxy-D-xylulose-5-phosphate synthase from Thermotoga maritima (strain ATCC 43589 / DSM 3109 / JCM 10099 / NBRC 100826 / MSB8).